Here is a 333-residue protein sequence, read N- to C-terminus: EP300-interacting inhibitor of differentiation 3 (333 aa).

Belongs to the NSE4 family. As to quaternary structure, component of the SMC5-SMC6 complex which consists at least of SMC5, SMC6, NSMCE2, NSMCE1, NSMCE4A or EID3 and NSMCE3; EID3 seems to be a testis-specific subunit. NSMCE1, NSMCE4A or EID3 and NSMCE3 probably form a subcomplex that bridges the head domains of the SMC5:SMC6 heterodimer. Homodimer, and heterodimer with EID2. Interacts with the C-terminal region of CREBBP. As to expression, highly expressed in testis.

The protein localises to the nucleus. The protein resides in the cytoplasm. Its subcellular location is the chromosome. It localises to the telomere. Its function is as follows. Tissue-specific component of the SMC5-SMC6 complex, a complex involved in repair of DNA double-strand breaks by homologous recombination. The complex may promote sister chromatid homologous recombination by recruiting the SMC1-SMC3 cohesin complex to double-strand breaks. The complex is required for telomere maintenance via recombination and mediates sumoylation of shelterin complex (telosome) components. Acts as a repressor of nuclear receptor-dependent transcription possibly by interfering with CREBBP-dependent coactivation. May function as a coinhibitor of other CREBBP/EP300-dependent transcription factors. The chain is EP300-interacting inhibitor of differentiation 3 from Homo sapiens (Human).